The chain runs to 137 residues: Protein FrxA (137 aa).

The chain is Protein FrxA (frxA) from Pyrococcus furiosus (strain ATCC 43587 / DSM 3638 / JCM 8422 / Vc1).